The chain runs to 137 residues: Small ribosomal subunit protein bS18c (137 aa).

It belongs to the bacterial ribosomal protein bS18 family. As to quaternary structure, part of the 30S ribosomal subunit.

The protein localises to the plastid. It is found in the chloroplast. The polypeptide is Small ribosomal subunit protein bS18c (rps18) (Chlamydomonas reinhardtii (Chlamydomonas smithii)).